The primary structure comprises 360 residues: S-adenosylmethionine decarboxylase proenzyme (360 aa).

Active-site residues include glutamate 13 and glutamate 16. Residue serine 73 is the Schiff-base intermediate with substrate; via pyruvic acid of the active site. A Pyruvic acid (Ser); by autocatalysis modification is found at serine 73. The Proton donor; for catalytic activity role is filled by cysteine 87. Catalysis depends on proton acceptor; for processing activity residues serine 236 and histidine 249.

Belongs to the eukaryotic AdoMetDC family. Pyruvate is required as a cofactor. In terms of processing, is synthesized initially as an inactive proenzyme. Formation of the active enzyme involves a self-maturation process in which the active site pyruvoyl group is generated from an internal serine residue via an autocatalytic post-translational modification. Two non-identical subunits are generated from the proenzyme in this reaction, and the pyruvate is formed at the N-terminus of the alpha chain, which is derived from the carboxyl end of the proenzyme. The post-translation cleavage follows an unusual pathway, termed non-hydrolytic serinolysis, in which the side chain hydroxyl group of the serine supplies its oxygen atom to form the C-terminus of the beta chain, while the remainder of the serine residue undergoes an oxidative deamination to produce ammonia and the pyruvoyl group blocking the N-terminus of the alpha chain. As to expression, stolon, also expressed in leaves, stems and roots.

The enzyme catalyses S-adenosyl-L-methionine + H(+) = S-adenosyl 3-(methylsulfanyl)propylamine + CO2. It participates in amine and polyamine biosynthesis; S-adenosylmethioninamine biosynthesis; S-adenosylmethioninamine from S-adenosyl-L-methionine: step 1/1. The chain is S-adenosylmethionine decarboxylase proenzyme (SAMDC) from Solanum tuberosum (Potato).